The primary structure comprises 154 residues: Pro-corazonin (154 aa).

The signal sequence occupies residues 1–19 (MLRLLLLPLFLFTLSMCMG). Glutamine 20 bears the Pyrrolidone carboxylic acid mark. At asparagine 30 the chain carries Asparagine amide. Residues 70–154 (LERCLSQLQR…SAEPNVFGKH (85 aa)) constitute a propeptide that is removed on maturation.

This sequence belongs to the corazonin family. As to expression, expression is restricted to 24 neurons in the larval CNS (8 in the brain and 16 in the ventral nerve cord) and 12-16 neurons in the pars lateralis of the adult brain.

The protein localises to the secreted. Cardioactive peptide. Corazonin is probably involved in the physiological regulation of the heart beat. Clock (Clk) and cycle (cyc) proteins negatively regulate Crz transcription in a cell-specific manner. This chain is Pro-corazonin (Crz), found in Drosophila simulans (Fruit fly).